The primary structure comprises 177 residues: Isopentenyl-diphosphate Delta-isomerase (177 aa).

Mn(2+) is bound by residues His-22 and His-28. The Nudix hydrolase domain occupies 26-160 (LRHMAISVFV…PERFTPWLRI (135 aa)). Cys-62 is a catalytic residue. His-64 is a binding site for Mn(2+). Residue Glu-82 participates in Mg(2+) binding. Residues Glu-108 and Glu-110 each contribute to the Mn(2+) site. Residue Glu-110 is part of the active site.

This sequence belongs to the IPP isomerase type 1 family. Mg(2+) serves as cofactor. It depends on Mn(2+) as a cofactor.

Its subcellular location is the cytoplasm. The catalysed reaction is isopentenyl diphosphate = dimethylallyl diphosphate. Its pathway is isoprenoid biosynthesis; dimethylallyl diphosphate biosynthesis; dimethylallyl diphosphate from isopentenyl diphosphate: step 1/1. It participates in porphyrin-containing compound metabolism; chlorophyll biosynthesis. Functionally, catalyzes the 1,3-allylic rearrangement of the homoallylic substrate isopentenyl (IPP) to its highly electrophilic allylic isomer, dimethylallyl diphosphate (DMAPP). In Cereibacter sphaeroides (strain ATCC 17029 / ATH 2.4.9) (Rhodobacter sphaeroides), this protein is Isopentenyl-diphosphate Delta-isomerase.